A 758-amino-acid polypeptide reads, in one-letter code: Microtubule-associated protein tau (758 aa).

Over residues 1–26 (MAEPHQEFDVTEDHAGTYGLGDRKDQ) the composition is skewed to basic and acidic residues. The segment at 1–573 (MAEPHQEFDV…PVPMPDLKNV (573 aa)) is disordered. Position 2 is an N-acetylalanine (Ala2). Tyr18 and Tyr29 each carry phosphotyrosine. Lys44 participates in a covalent cross-link: Glycyl lysine isopeptide (Lys-Gly) (interchain with G-Cter in ubiquitin). Phosphoserine is present on residues Ser46 and Ser61. Residues 61-71 (SETSDAKSTPT) show a composition bias toward polar residues. Phosphothreonine is present on residues Thr69, Thr71, and Thr111. Basic and acidic residues-rich tracts occupy residues 179–189 (EGGRHAPELLK) and 207–216 (GGKERPGSKE). Residue Ser214 is modified to Phosphoserine. Residues 217 to 228 (EVDEDRDVDESS) are compositionally biased toward acidic residues. Positions 314–323 (EQAHSEEHLR) are enriched in basic and acidic residues. Over residues 325 to 340 (AAFPGAPGEGPEAQGP) the composition is skewed to low complexity. 2 stretches are compositionally biased toward basic and acidic residues: residues 344–356 (EDAK…EPSE) and 381–393 (KSKD…DKKA). The segment covering 440–452 (KYVSSVTPRTGSS) has biased composition (polar residues). Basic and acidic residues predominate over residues 455–466 (KEMKLKGADGKT). Phosphothreonine is present on Thr470. The residue at position 472 (Arg472) is an Omega-N-methylarginine. Lys480 bears the N6,N6-dimethyllysine; alternate mark. Lys480 carries the N6-acetyllysine; alternate modification. Thr486, Thr492, and Thr498 each carry phosphothreonine. Residues 491-503 (KTPPAPKTPPSSG) show a composition bias toward pro residues. Phosphoserine is present on residues Ser502, Ser508, and Ser512. Positions 504–531 (EPPKSGDRSGYSSPGSPGTPGSRSRTPS) are enriched in low complexity. Position 514 is a phosphotyrosine (Tyr514). A phosphoserine mark is found at Ser515, Ser516, and Ser519. Residues Thr522 and Thr529 each carry the phosphothreonine modification. Ser531 bears the Phosphoserine mark. Thr534 carries the post-translational modification Phosphothreonine. Lys542 is subject to N6-acetyllysine. Thr548 is subject to Phosphothreonine. Phosphoserine occurs at positions 552 and 554. Tau/MAP repeat units follow at residues 561–591 (QTAP…GGGK), 592–622 (VQII…GGGS), 623–653 (VQIV…GGGQ), and 654–685 (VEVK…GGGH). A Glycyl lysine isopeptide (Lys-Gly) (interchain with G-Cter in ubiquitin) cross-link involves residue Lys571. The residue at position 576 (Lys576) is an N6-acetyllysine; alternate. Position 576 is an N6-methyllysine; alternate (Lys576). A Glycyl lysine isopeptide (Lys-Gly) (interchain with G-Cter in ubiquitin); alternate cross-link involves residue Lys576. Ser579 bears the Phosphoserine mark. Lys584 participates in a covalent cross-link: Glycyl lysine isopeptide (Lys-Gly) (interchain with G-Cter in ubiquitin). Residue Lys598 is modified to N6-acetyllysine; alternate. Lys598 participates in a covalent cross-link: Glycyl lysine isopeptide (Lys-Gly) (interchain with G-Cter in ubiquitin); alternate. Phosphoserine occurs at positions 602 and 606. Lys607 is subject to N6-acetyllysine. Residue Ser610 is modified to Phosphoserine. The residue at position 615 (Lys615) is an N6-acetyllysine; alternate. Lys615 participates in a covalent cross-link: Glycyl lysine isopeptide (Lys-Gly) (interchain with G-Cter in ubiquitin); alternate. Ser622 carries the post-translational modification Phosphoserine. At Lys628 the chain carries N6,N6-dimethyllysine; alternate. N6-acetyllysine; alternate occurs at positions 628, 634, and 638. Residues Lys628, Lys634, and Lys638 each participate in a glycyl lysine isopeptide (Lys-Gly) (interchain with G-Cter in ubiquitin); alternate cross-link. Residue Ser641 is modified to Phosphoserine. Residues Lys648, Lys660, and Lys664 each carry the N6-acetyllysine; alternate modification. Glycyl lysine isopeptide (Lys-Gly) (interchain with G-Cter in ubiquitin); alternate cross-links involve residues Lys648, Lys660, and Lys664. At Arg666 the chain carries Omega-N-methylarginine. Position 669 is a phosphoserine (Ser669). Lys670 participates in a covalent cross-link: Glycyl lysine isopeptide (Lys-Gly) (interchain with G-Cter in ubiquitin). A Phosphoserine modification is found at Ser673. An N6-acetyllysine; alternate modification is found at Lys686. A Glycyl lysine isopeptide (Lys-Gly) (interchain with G-Cter in ubiquitin); alternate cross-link involves residue Lys686. Lys692 participates in a covalent cross-link: Glycyl lysine isopeptide (Lys-Gly) (interchain with G-Cter in ubiquitin). An N6-acetyllysine; alternate modification is found at Lys702. Lys702 is covalently cross-linked (Glycyl lysine isopeptide (Lys-Gly) (interchain with G-Cter in ubiquitin); alternate). Tyr711 is subject to Phosphotyrosine. Residues Ser713 and Ser717 each carry the phosphoserine modification. Residues 715–734 (VVSGDTSPRHLSNVSSTGSI) are disordered. Positions 718 to 733 (GDTSPRHLSNVSSTGS) are enriched in polar residues. Residue Thr720 is modified to Phosphothreonine. A phosphoserine mark is found at Ser721, Ser726, Ser733, and Ser739. The residue at position 744 (Thr744) is a Phosphothreonine.

In terms of assembly, interacts with MARK1, MARK2, MARK3 and MARK4. Interacts with SQSTM1 when polyubiquitinated. Interacts with PSMC2 through SQSTM1. Interacts with FKBP4. Binds to CSNK1D. Interacts with SGK1. Interacts with EPM2A; the interaction dephosphorylates MAPT at Ser-396. Interacts with PIN1. Interacts with LRRK2. Interacts with LRP1, leading to endocytosis; this interaction is reduced in the presence of LRPAP1/RAP. Post-translationally, polyubiquitinated. Requires functional TRAF6 and may provoke SQSTM1-dependent degradation by the proteasome. In terms of processing, phosphorylation at various serine and threonine residues in S-P or T-P motifs by proline-directed protein kinases (PDPK1, CDK1, CDK5, GSK3, MAPK) (a few sites per protein in interphase, more in mitosis), and at serine residues in K-X-G-S motifs by MAP/microtubule affinity-regulating kinase (MARK1, MARK2, MARK3 or MARK4), causing detachment from microtubules, and their disassembly. Phosphorylation at Ser-579 by BRSK1 and BRSK2 in neurons affects ability to bind microtubules and plays a role in neuron polarization. Phosphorylated by PHK. Dephosphorylation at several serine and threonine residues by the serine/threonine phosphatase PPP5C. Phosphorylation at Ser-214 by SGK1 mediates microtubule depolymerization and neurite formation in hippocampal neurons.

Its subcellular location is the cytoplasm. The protein resides in the cytosol. It localises to the cell membrane. The protein localises to the cytoskeleton. It is found in the cell projection. Its subcellular location is the axon. The protein resides in the dendrite. Promotes microtubule assembly and stability, and might be involved in the establishment and maintenance of neuronal polarity. The C-terminus binds axonal microtubules while the N-terminus binds neural plasma membrane components, suggesting that tau functions as a linker protein between both. Axonal polarity is predetermined by tau localization (in the neuronal cell) in the domain of the cell body defined by the centrosome. The short isoforms allow plasticity of the cytoskeleton whereas the longer isoforms may preferentially play a role in its stabilization. The polypeptide is Microtubule-associated protein tau (MAPT) (Pongo pygmaeus (Bornean orangutan)).